The sequence spans 315 residues: DNA-directed RNA polymerase subunit alpha (315 aa).

Residues 1–228 form an alpha N-terminal domain (alpha-NTD) region; the sequence is MIEIEKPKVD…EHLNLFIDLT (228 aa). The interval 245-315 is alpha C-terminal domain (alpha-CTD); it reads KEKVLEMTIE…LGLGLKPSEE (71 aa).

Belongs to the RNA polymerase alpha chain family. As to quaternary structure, homodimer. The RNAP catalytic core consists of 2 alpha, 1 beta, 1 beta' and 1 omega subunit. When a sigma factor is associated with the core the holoenzyme is formed, which can initiate transcription.

It carries out the reaction RNA(n) + a ribonucleoside 5'-triphosphate = RNA(n+1) + diphosphate. In terms of biological role, DNA-dependent RNA polymerase catalyzes the transcription of DNA into RNA using the four ribonucleoside triphosphates as substrates. In Clostridioides difficile (strain 630) (Peptoclostridium difficile), this protein is DNA-directed RNA polymerase subunit alpha.